Consider the following 264-residue polypeptide: MTGHHCWGYGQDDGPSNWHKLYPIAQGDRQSPINIISSQAVYSPSLQPLELFYEACMSLSITNNGHSVQVDFNDSDDRTVVSGGPLEGPYRLKQLHFHWGKKRDMGSEHTVDGKSFPSELHLVHWNAKKYSTFGEAAAAPDGLAVVGVFLETGDEHPSMNRLTDALYMVRFKDTKAQFSCFNPKCLLPTSRHYWTYPGSLTTPPLSESVTWIVLREPIRISERQMEKFRSLLFTSEDDERIHMVDNFRPPQPLKGRVVKASFQA.

The Alpha-carbonic anhydrase domain maps to 5–262 (HCWGYGQDDG…LKGRVVKASF (258 aa)). Histidine 66 functions as the Proton donor/acceptor in the catalytic mechanism. Positions 96, 98, and 121 each coordinate Zn(2+). Substrate is bound at residue 201–202 (TT).

This sequence belongs to the alpha-carbonic anhydrase family. It depends on Zn(2+) as a cofactor.

It is found in the cytoplasm. The catalysed reaction is hydrogencarbonate + H(+) = CO2 + H2O. In terms of biological role, reversible hydration of carbon dioxide. This chain is Carbonic anhydrase 7 (Ca7), found in Mus musculus (Mouse).